The following is a 118-amino-acid chain: Large ribosomal subunit protein bL17 (118 aa).

The protein belongs to the bacterial ribosomal protein bL17 family. In terms of assembly, part of the 50S ribosomal subunit. Contacts protein L32.

This chain is Large ribosomal subunit protein bL17, found in Phytoplasma australiense.